A 340-amino-acid polypeptide reads, in one-letter code: Methionine import ATP-binding protein MetN (340 aa).

The ABC transporter domain maps to 5–243; that stretch reads IEFRGVTKSF…PQTTTARRFV (239 aa). 40 to 47 serves as a coordination point for ATP; that stretch reads GYSGAGKS.

This sequence belongs to the ABC transporter superfamily. Methionine importer (TC 3.A.1.24) family. In terms of assembly, the complex is composed of two ATP-binding proteins (MetN), two transmembrane proteins (MetI) and a solute-binding protein (MetQ).

The protein resides in the cell membrane. The catalysed reaction is L-methionine(out) + ATP + H2O = L-methionine(in) + ADP + phosphate + H(+). The enzyme catalyses D-methionine(out) + ATP + H2O = D-methionine(in) + ADP + phosphate + H(+). Part of the ABC transporter complex MetNIQ involved in methionine import. Responsible for energy coupling to the transport system. In Leifsonia xyli subsp. xyli (strain CTCB07), this protein is Methionine import ATP-binding protein MetN.